A 201-amino-acid polypeptide reads, in one-letter code: UPF0301 protein CE2927 (201 aa).

It belongs to the UPF0301 (AlgH) family.

This Corynebacterium efficiens (strain DSM 44549 / YS-314 / AJ 12310 / JCM 11189 / NBRC 100395) protein is UPF0301 protein CE2927.